Reading from the N-terminus, the 1165-residue chain is ATP-dependent helicase/deoxyribonuclease subunit B (1165 aa).

Residues 1-298 form the UvrD-like helicase ATP-binding domain; it reads MALRFILGRA…AHLEREFFRR (298 aa). 8-15 contacts ATP; it reads GRAGTGKT. Positions 279 to 584 constitute a UvrD-like helicase C-terminal domain; it reads PARFRANPAL…QLALIPPALD (306 aa). [4Fe-4S] cluster is bound by residues cysteine 800, cysteine 1119, cysteine 1122, and cysteine 1128.

Belongs to the helicase family. AddB/RexB type 1 subfamily. In terms of assembly, heterodimer of AddA and AddB. Requires Mg(2+) as cofactor. [4Fe-4S] cluster serves as cofactor.

The heterodimer acts as both an ATP-dependent DNA helicase and an ATP-dependent, dual-direction single-stranded exonuclease. Recognizes the chi site generating a DNA molecule suitable for the initiation of homologous recombination. The AddB subunit has 5' -&gt; 3' nuclease activity but not helicase activity. This chain is ATP-dependent helicase/deoxyribonuclease subunit B, found in Desulforudis audaxviator (strain MP104C).